Consider the following 139-residue polypeptide: D-ribose pyranase (139 aa).

His-20 serves as the catalytic Proton donor. Substrate is bound by residues Asp-28, His-106, and 128–130; that span reads YAN.

This sequence belongs to the RbsD / FucU family. RbsD subfamily. In terms of assembly, homodecamer.

Its subcellular location is the cytoplasm. It carries out the reaction beta-D-ribopyranose = beta-D-ribofuranose. Its pathway is carbohydrate metabolism; D-ribose degradation; D-ribose 5-phosphate from beta-D-ribopyranose: step 1/2. In terms of biological role, catalyzes the interconversion of beta-pyran and beta-furan forms of D-ribose. The chain is D-ribose pyranase from Haemophilus influenzae (strain 86-028NP).